The sequence spans 241 residues: MSADAGPGSGALVLFSGGQDSTTTLAWALDRFERVETLGFDYGQRHRIELDCRVKVRAAMAALNPAWAAKLGEDHTLALDALGAVSDTALTRDVAIEMTEGGLPNTFVPGRNIVFLTFAAALAYRRGLKHIVGGMCETDFSGYPDCRDDTIKALQVALNLGMDRRFVLETPLMWIDKAETWRLAERLGGRALVDLIVEDTHTCYLGERGPRHPWGHGCGTCPACQLRAEGFARYEAARVSE.

15-25 (FSGGQDSTTTL) is an ATP binding site. Residues Cys-203, Cys-218, Cys-221, and Cys-224 each coordinate Zn(2+).

It belongs to the QueC family. The cofactor is Zn(2+).

It catalyses the reaction 7-carboxy-7-deazaguanine + NH4(+) + ATP = 7-cyano-7-deazaguanine + ADP + phosphate + H2O + H(+). It participates in purine metabolism; 7-cyano-7-deazaguanine biosynthesis. Its function is as follows. Catalyzes the ATP-dependent conversion of 7-carboxy-7-deazaguanine (CDG) to 7-cyano-7-deazaguanine (preQ(0)). The sequence is that of 7-cyano-7-deazaguanine synthase from Azorhizobium caulinodans (strain ATCC 43989 / DSM 5975 / JCM 20966 / LMG 6465 / NBRC 14845 / NCIMB 13405 / ORS 571).